The following is a 354-amino-acid chain: MGVLDIVKAGVISGDELNKIYDYAKAEGFAIPAVNVVGTDSINAVLEAAKKVNSPVIIQFSNGGAKFYAGKNCPNGEVLGAISGAKHVHLLAKAYGVPVILHTDHAARKLLPWIDGLIEANAQYKKTHGQALFSSHMLDLSEESLEENLSTCEVYLQKLDALGVALEIELGCTGGEEDGVDNTGIDNSKLYTQPEDVALAYERLGKISDKFSIAASFGNVHGVYKPGNVSLQPEILKNSQKFVKDKFALNSDKPINFVFHGGSGSELKDIKNAVSYGVIKMNIDTDTQWAFWDGVREYELKNRAYLQGQIGNPEGDDKPNKKYYDPRVWLRSGEESMIKRLEIAFEDLNCINKN.

Residue S61 participates in D-glyceraldehyde 3-phosphate binding. The Proton donor role is filled by D104. Zn(2+)-binding residues include H105, D139, E169, and H221. A dihydroxyacetone phosphate-binding site is contributed by G222. A Zn(2+)-binding site is contributed by H260. Dihydroxyacetone phosphate-binding positions include 261–263 (GGS) and 282–285 (NIDT).

Belongs to the class II fructose-bisphosphate aldolase family. Homodimer. Requires Zn(2+) as cofactor.

The catalysed reaction is beta-D-fructose 1,6-bisphosphate = D-glyceraldehyde 3-phosphate + dihydroxyacetone phosphate. It participates in carbohydrate degradation; glycolysis; D-glyceraldehyde 3-phosphate and glycerone phosphate from D-glucose: step 4/4. In terms of biological role, catalyzes the aldol condensation of dihydroxyacetone phosphate (DHAP or glycerone-phosphate) with glyceraldehyde 3-phosphate (G3P) to form fructose 1,6-bisphosphate (FBP) in gluconeogenesis and the reverse reaction in glycolysis. The sequence is that of Fructose-bisphosphate aldolase (fba) from Campylobacter jejuni subsp. jejuni serotype O:2 (strain ATCC 700819 / NCTC 11168).